We begin with the raw amino-acid sequence, 236 residues long: Glucosamine-6-phosphate deaminase (236 aa).

The active-site Proton acceptor; for enolization step is aspartate 67. Residue asparagine 136 is the For ring-opening step of the active site. The active-site Proton acceptor; for ring-opening step is the histidine 138. Glutamate 143 functions as the For ring-opening step in the catalytic mechanism.

This sequence belongs to the glucosamine/galactosamine-6-phosphate isomerase family. NagB subfamily.

It carries out the reaction alpha-D-glucosamine 6-phosphate + H2O = beta-D-fructose 6-phosphate + NH4(+). The protein operates within amino-sugar metabolism; N-acetylneuraminate degradation; D-fructose 6-phosphate from N-acetylneuraminate: step 5/5. In terms of biological role, catalyzes the reversible isomerization-deamination of glucosamine 6-phosphate (GlcN6P) to form fructose 6-phosphate (Fru6P) and ammonium ion. This chain is Glucosamine-6-phosphate deaminase, found in Lachnoclostridium phytofermentans (strain ATCC 700394 / DSM 18823 / ISDg) (Clostridium phytofermentans).